The primary structure comprises 158 residues: NAD(P)H-quinone oxidoreductase subunit N (158 aa).

This sequence belongs to the complex I NdhN subunit family. NDH-1 can be composed of about 15 different subunits; different subcomplexes with different compositions have been identified which probably have different functions.

Its subcellular location is the cellular thylakoid membrane. The catalysed reaction is a plastoquinone + NADH + (n+1) H(+)(in) = a plastoquinol + NAD(+) + n H(+)(out). It carries out the reaction a plastoquinone + NADPH + (n+1) H(+)(in) = a plastoquinol + NADP(+) + n H(+)(out). Functionally, NDH-1 shuttles electrons from an unknown electron donor, via FMN and iron-sulfur (Fe-S) centers, to quinones in the respiratory and/or the photosynthetic chain. The immediate electron acceptor for the enzyme in this species is believed to be plastoquinone. Couples the redox reaction to proton translocation, and thus conserves the redox energy in a proton gradient. Cyanobacterial NDH-1 also plays a role in inorganic carbon-concentration. This is NAD(P)H-quinone oxidoreductase subunit N from Prochlorococcus marinus (strain MIT 9312).